The following is a 510-amino-acid chain: D-alanine--D-alanyl carrier protein ligase (510 aa).

ATP is bound at residue 157 to 158 (TS). Aspartate 202 contributes to the D-alanine binding site. 297–302 (NTYGPT) is an ATP binding site. Valine 306 serves as a coordination point for D-alanine. Residues aspartate 389 and lysine 498 each contribute to the ATP site. Position 498 (lysine 498) interacts with D-alanine.

It belongs to the ATP-dependent AMP-binding enzyme family. DltA subfamily.

It is found in the cytoplasm. The catalysed reaction is holo-[D-alanyl-carrier protein] + D-alanine + ATP = D-alanyl-[D-alanyl-carrier protein] + AMP + diphosphate. The protein operates within cell wall biogenesis; lipoteichoic acid biosynthesis. Catalyzes the first step in the D-alanylation of lipoteichoic acid (LTA), the activation of D-alanine and its transfer onto the D-alanyl carrier protein (Dcp) DltC. In an ATP-dependent two-step reaction, forms a high energy D-alanyl-AMP intermediate, followed by transfer of the D-alanyl residue as a thiol ester to the phosphopantheinyl prosthetic group of the Dcp. D-alanylation of LTA plays an important role in modulating the properties of the cell wall in Gram-positive bacteria, influencing the net charge of the cell wall. This Listeria innocua serovar 6a (strain ATCC BAA-680 / CLIP 11262) protein is D-alanine--D-alanyl carrier protein ligase.